The chain runs to 639 residues: Tetracycline resistance protein TetW (639 aa).

A tr-type G domain is found at 1-243 (MKIINIGILA…VTGLFQPIGE (243 aa)). Residues 10 to 17 (AHVDAGKT), 74 to 78 (DTPGH), and 128 to 131 (NKID) contribute to the GTP site.

Belongs to the TRAFAC class translation factor GTPase superfamily. Classic translation factor GTPase family. TetM/TetO subfamily.

In terms of biological role, abolishes the inhibitory effect of tetracyclin on protein synthesis by a non-covalent modification of the ribosomes. In Butyrivibrio fibrisolvens, this protein is Tetracycline resistance protein TetW (tetW).